The primary structure comprises 102 residues: NADH-quinone oxidoreductase subunit K (102 aa).

Helical transmembrane passes span 5-25 (ITHY…GIFL), 31-51 (IIIL…FVAF), and 66-86 (FILT…VVFF).

The protein belongs to the complex I subunit 4L family. As to quaternary structure, NDH-1 is composed of 14 different subunits. Subunits NuoA, H, J, K, L, M, N constitute the membrane sector of the complex.

It is found in the cell inner membrane. It carries out the reaction a quinone + NADH + 5 H(+)(in) = a quinol + NAD(+) + 4 H(+)(out). Its function is as follows. NDH-1 shuttles electrons from NADH, via FMN and iron-sulfur (Fe-S) centers, to quinones in the respiratory chain. The immediate electron acceptor for the enzyme in this species is believed to be ubiquinone. Couples the redox reaction to proton translocation (for every two electrons transferred, four hydrogen ions are translocated across the cytoplasmic membrane), and thus conserves the redox energy in a proton gradient. This is NADH-quinone oxidoreductase subunit K from Bartonella quintana (strain Toulouse) (Rochalimaea quintana).